Reading from the N-terminus, the 298-residue chain is Arginine/serine-rich protein 1 (298 aa).

A disordered region spans residues 1–135 (MSSAAMSKYV…SRSRSRGRSQ (135 aa)). Serine 17 carries the phosphoserine modification. Positions 23–36 (SPSTSGSGRSSRLS) are enriched in low complexity. Over residues 60-105 (SRSHSRPRRSRRSRSRSRRRHQRKYRRYSRSYSRSRSRSRSHRYHR) the composition is skewed to basic residues. 2 positions are modified to phosphoserine: serine 118 and serine 120. Residues 124 to 135 (SRSRSRSRGRSQ) show a composition bias toward basic residues. Arginine 145 carries the omega-N-methylarginine modification. Disordered regions lie at residues 161–181 (RPRW…TPFR) and 218–298 (ASQG…WIPV). The segment covering 219-228 (SQGTAVSSSG) has biased composition (polar residues). Basic and acidic residues predominate over residues 230 to 246 (KVEHSEKQTEDATKNTS). The span at 247 to 271 (EKSSTQRNIAFSSNNSVAKPLQKTT) shows a compositional bias: polar residues. Basic and acidic residues predominate over residues 274–289 (AVEEKSSGSPKIDKKK). Phosphoserine is present on serine 282.

This sequence belongs to the RSRP family. Post-translationally, phosphorylated. Phosphorylation at Ser-118 and Ser-120 mediates the interaction with spliceosome proteins.

The protein localises to the nucleus. Functionally, probably acts as a spliceosomal factor that contributes to spliceosome assembly and regulates the isoform switching of proteins such as PARP6. This Mus musculus (Mouse) protein is Arginine/serine-rich protein 1 (Rsrp1).